Reading from the N-terminus, the 623-residue chain is tRNA uridine 5-carboxymethylaminomethyl modification enzyme MnmG (623 aa).

12 to 17 serves as a coordination point for FAD; the sequence is GAGHAG. 272-286 contacts NAD(+); that stretch reads GPRYCPSIEDKINRF.

It belongs to the MnmG family. In terms of assembly, homodimer. Heterotetramer of two MnmE and two MnmG subunits. FAD is required as a cofactor.

The protein localises to the cytoplasm. Its function is as follows. NAD-binding protein involved in the addition of a carboxymethylaminomethyl (cmnm) group at the wobble position (U34) of certain tRNAs, forming tRNA-cmnm(5)s(2)U34. The sequence is that of tRNA uridine 5-carboxymethylaminomethyl modification enzyme MnmG from Christiangramia forsetii (strain DSM 17595 / CGMCC 1.15422 / KT0803) (Gramella forsetii).